The chain runs to 171 residues: Moubatin (171 aa).

An N-terminal signal peptide occupies residues 1-15; that stretch reads MMLVLTTLIFSFSAS. Disulfide bonds link C23-C144, C55-C166, and C118-C145.

The protein belongs to the calycin superfamily. Lipocalin family. Post-translationally, the N-terminus is blocked. In terms of tissue distribution, expressed in salivary glands.

The protein resides in the secreted. Tick salivary platelet aggregation inhibitor that plays an important part in the anti-hemostatic strategy of ticks. Acts by scavenging thromboxane A2 (TXA2), a potent inducer of platelet aggregation and blood vessel constriction. As a consequence, is a specific inhibitor of collagen-induced platelet aggregation. In addition, it also acts as a potent inhibitor of TXA2-mediated vasoconstriction. Has also been found to bind leukotriene B4 (LTB4) (which also derives from arachidonic acid, as TXA2) with affinities in the nanomolar range. It does not interact with complement protein C5. This Ornithodoros moubata (Soft tick) protein is Moubatin.